The chain runs to 294 residues: MKPFLRWCFVATALTLAGCSNTSWRKSEVLAVPLQPTLQQEVILARMEQILASRALTDDERAQLLYERGVLYDSLGLRALARNDFSQALAIRPDMPEVFNYLGIYLTQAGNFDAAYEAFDSVLELDPTYNYAHLNRGIALYYGGRDKLAQDDLLAFYQDDPNDPFRSLWLYLAEQKLDEKQAKEVLRQHFEKSDKEQWGWNIVEFYLGNISEQTLMERLKADATDNTSLAEHLSETNFYLGKYYLSLGDLDSATALFKLAVANNVHNFVEHRYALLELSLLGQDQDDLAESDQQ.

The N-terminal stretch at 1–18 (MKPFLRWCFVATALTLAG) is a signal peptide. A lipid anchor (N-palmitoyl cysteine) is attached at C19. C19 carries S-diacylglycerol cysteine lipidation. TPR repeat units follow at residues 62 to 95 (AQLL…RPDM), 96 to 129 (PEVF…DPTY), and 234 to 267 (SETN…NVHN).

As to quaternary structure, homodimer.

Its subcellular location is the cell membrane. Its function is as follows. May be involved in cell division. May play a role in bacterial septation or regulation of cell wall degradation during cell division. The sequence is that of Lipoprotein NlpI (nlpI) from Escherichia coli O17:K52:H18 (strain UMN026 / ExPEC).